The following is a 130-amino-acid chain: Small ribosomal subunit protein uS9 (130 aa).

It belongs to the universal ribosomal protein uS9 family.

The chain is Small ribosomal subunit protein uS9 from Leptothrix cholodnii (strain ATCC 51168 / LMG 8142 / SP-6) (Leptothrix discophora (strain SP-6)).